The sequence spans 286 residues: Centromere protein P (286 aa).

A coiled-coil region spans residues 1–73; it reads MDSETRELRA…RSEHSFLSKL (73 aa). Ser-38 bears the Phosphoserine mark.

This sequence belongs to the CENP-P/CTF19 family. As to quaternary structure, component of the CENPA-CAD complex, composed of CENPI, CENPK, CENPL, CENPO, CENPP, CENPQ, CENPR and CENPS. The CENPA-CAD complex interacts with the CENPA-NAC complex, at least composed of CENPA, CENPC, CENPH, CENPM, CENPN, CENPT and CENPU.

The protein resides in the nucleus. The protein localises to the chromosome. Its subcellular location is the centromere. Its function is as follows. Component of the CENPA-CAD (nucleosome distal) complex, a complex recruited to centromeres which is involved in assembly of kinetochore proteins, mitotic progression and chromosome segregation. May be involved in incorporation of newly synthesized CENPA into centromeres via its interaction with the CENPA-NAC complex. In Mus musculus (Mouse), this protein is Centromere protein P (Cenpp).